Here is a 1431-residue protein sequence, read N- to C-terminus: Probable ATP-dependent RNA helicase spindle-E (1431 aa).

The 168-residue stretch at 127 to 294 (LAAIRENPVV…FAMSSSLPPV (168 aa)) folds into the Helicase ATP-binding domain. 140 to 147 (GETGCGKT) is an ATP binding site. Residues 240–243 (DEVH) carry the DEAH box motif. The region spanning 354 to 526 (QSQQSYEEAK…NSVLKAKELE (173 aa)) is the Helicase C-terminal domain. The Tudor domain occupies 937 to 1000 (AKAVTKGLQL…RLMSPQLKRD (64 aa)).

The protein belongs to the DEAD box helicase family. DEAH subfamily.

Its subcellular location is the cytoplasm. The enzyme catalyses ATP + H2O = ADP + phosphate + H(+). Functionally, probable ATP-binding RNA helicase which plays a central role during spermatogenesis and oogenesis by repressing transposable elements and preventing their mobilization, which is essential for the germline integrity. Acts via the piRNA metabolic process, which mediates the repression of transposable elements during meiosis by forming complexes composed of piRNAs and Piwi and govern the methylation and subsequent repression of transposons. Involved in the repression of LTR retrotransposon copia. Also involved in telomere regulation by repressing specialized telomeric retroelements HeT-A, TAHRE, and TART; Drosophila telomeres being maintained by transposition of specialized telomeric retroelements. Involved in telomeric trans-silencing, a repression mechanism by which a transposon or a transgene inserted in subtelomeric heterochromatin has the capacity to repress in trans in the female germline, a homologous transposon, or transgene located in euchromatin. Involved in the repression of testis-expressed Stellate genes by the homologous Su(Ste) repeats. Required for anteroposterior and dorsoventral axis formation during oogenesis. The protein is Probable ATP-dependent RNA helicase spindle-E (spn-E) of Drosophila mojavensis (Fruit fly).